The following is a 288-amino-acid chain: Thymidylate synthase (288 aa).

Residues arginine 21 and 150–151 (RR) contribute to the dUMP site. Cysteine 170 acts as the Nucleophile in catalysis. DUMP is bound by residues 190-193 (RSGD), asparagine 201, and 231-233 (HIY). Position 193 (aspartate 193) interacts with (6R)-5,10-methylene-5,6,7,8-tetrahydrofolate. Position 287 (alanine 287) interacts with (6R)-5,10-methylene-5,6,7,8-tetrahydrofolate.

The protein belongs to the thymidylate synthase family. Bacterial-type ThyA subfamily. As to quaternary structure, homodimer.

Its subcellular location is the cytoplasm. The catalysed reaction is dUMP + (6R)-5,10-methylene-5,6,7,8-tetrahydrofolate = 7,8-dihydrofolate + dTMP. Its pathway is pyrimidine metabolism; dTTP biosynthesis. Functionally, catalyzes the reductive methylation of 2'-deoxyuridine-5'-monophosphate (dUMP) to 2'-deoxythymidine-5'-monophosphate (dTMP) while utilizing 5,10-methylenetetrahydrofolate (mTHF) as the methyl donor and reductant in the reaction, yielding dihydrofolate (DHF) as a by-product. This enzymatic reaction provides an intracellular de novo source of dTMP, an essential precursor for DNA biosynthesis. In Acholeplasma laidlawii (strain PG-8A), this protein is Thymidylate synthase.